The following is a 237-amino-acid chain: Phosphoribosylaminoimidazole-succinocarboxamide synthase (237 aa).

Belongs to the SAICAR synthetase family.

The catalysed reaction is 5-amino-1-(5-phospho-D-ribosyl)imidazole-4-carboxylate + L-aspartate + ATP = (2S)-2-[5-amino-1-(5-phospho-beta-D-ribosyl)imidazole-4-carboxamido]succinate + ADP + phosphate + 2 H(+). The protein operates within purine metabolism; IMP biosynthesis via de novo pathway; 5-amino-1-(5-phospho-D-ribosyl)imidazole-4-carboxamide from 5-amino-1-(5-phospho-D-ribosyl)imidazole-4-carboxylate: step 1/2. The chain is Phosphoribosylaminoimidazole-succinocarboxamide synthase from Citrobacter koseri (strain ATCC BAA-895 / CDC 4225-83 / SGSC4696).